The primary structure comprises 337 residues: Anthranilate phosphoribosyltransferase (337 aa).

5-phospho-alpha-D-ribose 1-diphosphate-binding positions include Gly82, 85–86, Thr90, 92–95, 110–118, and Ser122; these read GD, NIST, and KHGGRSVSS. Anthranilate is bound at residue Gly82. Ser94 provides a ligand contact to Mg(2+). Arg168 contacts anthranilate. Positions 226 and 227 each coordinate Mg(2+).

It belongs to the anthranilate phosphoribosyltransferase family. Homodimer. The cofactor is Mg(2+).

It catalyses the reaction N-(5-phospho-beta-D-ribosyl)anthranilate + diphosphate = 5-phospho-alpha-D-ribose 1-diphosphate + anthranilate. It participates in amino-acid biosynthesis; L-tryptophan biosynthesis; L-tryptophan from chorismate: step 2/5. Functionally, catalyzes the transfer of the phosphoribosyl group of 5-phosphorylribose-1-pyrophosphate (PRPP) to anthranilate to yield N-(5'-phosphoribosyl)-anthranilate (PRA). This Francisella tularensis subsp. novicida (strain U112) protein is Anthranilate phosphoribosyltransferase.